Consider the following 644-residue polypeptide: Interleukin-23 receptor (644 aa).

The N-terminal stretch at Met-1–Gly-23 is a signal peptide. Topologically, residues Gly-24–Gly-374 are extracellular. 3 N-linked (GlcNAc...) asparagine glycosylation sites follow: Asn-47, Asn-130, and Asn-232. Fibronectin type-III domains follow at residues Ala-127 to Ile-217 and Ile-219 to Glu-318. Residues Leu-375–Phe-395 form a helical membrane-spanning segment. At Asn-396–Lys-644 the chain is on the cytoplasmic side.

The protein belongs to the type I cytokine receptor family. Type 2 subfamily. As to quaternary structure, heterodimer with IL12RB1. In presence of IL23, the heterodimer forms the IL23 receptor. Interacts with JAK2 and in presence of IL23 with STAT3. In terms of processing, phosphorylated in response to IL23. Expressed by Th1, Th2 and dendritic cells.

The protein localises to the cell membrane. Its function is as follows. Associates with IL12RB1 to form the interleukin-23 receptor. Binds IL23 and mediates T-cells, NK cells and possibly certain macrophage/myeloid cells stimulation probably through activation of the Jak-Stat signaling cascade. IL23 functions in innate and adaptive immunity and may participate in acute response to infection in peripheral tissues. IL23 may be responsible for autoimmune inflammatory diseases and be important for tumorigenesis. This Mus musculus (Mouse) protein is Interleukin-23 receptor (Il23r).